Here is a 500-residue protein sequence, read N- to C-terminus: Probable cytosol aminopeptidase 1 (500 aa).

Mn(2+) contacts are provided by lysine 263 and aspartate 268. Lysine 275 is an active-site residue. Mn(2+)-binding residues include aspartate 287, aspartate 346, and glutamate 348. Arginine 350 is a catalytic residue.

Belongs to the peptidase M17 family. Mn(2+) is required as a cofactor.

It is found in the cytoplasm. It catalyses the reaction Release of an N-terminal amino acid, Xaa-|-Yaa-, in which Xaa is preferably Leu, but may be other amino acids including Pro although not Arg or Lys, and Yaa may be Pro. Amino acid amides and methyl esters are also readily hydrolyzed, but rates on arylamides are exceedingly low.. It carries out the reaction Release of an N-terminal amino acid, preferentially leucine, but not glutamic or aspartic acids.. In terms of biological role, presumably involved in the processing and regular turnover of intracellular proteins. Catalyzes the removal of unsubstituted N-terminal amino acids from various peptides. The chain is Probable cytosol aminopeptidase 1 (pepA1) from Shewanella oneidensis (strain ATCC 700550 / JCM 31522 / CIP 106686 / LMG 19005 / NCIMB 14063 / MR-1).